We begin with the raw amino-acid sequence, 728 residues long: Polyribonucleotide nucleotidyltransferase (728 aa).

Mg(2+) is bound by residues D509 and D515. The region spanning 576–638 (TKIYTFYIPK…TKLKIAILKI (63 aa)) is the KH domain. Residues 648-715 (GTIYKAKVKN…KFRKIKLSHK (68 aa)) form the S1 motif domain.

It belongs to the polyribonucleotide nucleotidyltransferase family. The cofactor is Mg(2+).

The protein localises to the cytoplasm. It carries out the reaction RNA(n+1) + phosphate = RNA(n) + a ribonucleoside 5'-diphosphate. Functionally, involved in mRNA degradation. Catalyzes the phosphorolysis of single-stranded polyribonucleotides processively in the 3'- to 5'-direction. In Karelsulcia muelleri (strain GWSS) (Sulcia muelleri), this protein is Polyribonucleotide nucleotidyltransferase.